Reading from the N-terminus, the 372-residue chain is tRNA-specific 2-thiouridylase MnmA (372 aa).

Residues Gly11–Ser18 and Met37 each bind ATP. The interaction with target base in tRNA stretch occupies residues Asn97–Asp99. Cys102 functions as the Nucleophile in the catalytic mechanism. Cysteines 102 and 199 form a disulfide. An ATP-binding site is contributed by Gly126. An interaction with tRNA region spans residues Lys149–Gln151. The active-site Cysteine persulfide intermediate is the Cys199. Residues Arg309–Tyr310 are interaction with tRNA.

It belongs to the MnmA/TRMU family.

It localises to the cytoplasm. The catalysed reaction is S-sulfanyl-L-cysteinyl-[protein] + uridine(34) in tRNA + AH2 + ATP = 2-thiouridine(34) in tRNA + L-cysteinyl-[protein] + A + AMP + diphosphate + H(+). Its function is as follows. Catalyzes the 2-thiolation of uridine at the wobble position (U34) of tRNA, leading to the formation of s(2)U34. The polypeptide is tRNA-specific 2-thiouridylase MnmA (Staphylococcus aureus (strain bovine RF122 / ET3-1)).